The chain runs to 182 residues: Testis development-related protein (182 aa).

2 disordered regions span residues 1-71 (MWKL…TNVR) and 117-152 (TDHT…SASS). Serine 7 bears the Phosphoserine mark. Positions 22–37 (RGASPASAAAQAPGAS) are enriched in low complexity. Residues 49 to 58 (NKDDEERLLE) show a composition bias toward basic and acidic residues. Over residues 59-68 (TSRSSKSKGT) the composition is skewed to polar residues.

It belongs to the TDRP family. In terms of assembly, interacts with PRM2. In terms of tissue distribution, predominantly expressed in testis.

The protein localises to the nucleus. Its subcellular location is the cytoplasm. In terms of biological role, contributes to normal sperm motility, but not essential for male fertility. The polypeptide is Testis development-related protein (Tdrp) (Rattus norvegicus (Rat)).